Reading from the N-terminus, the 131-residue chain is UPF0102 protein YraN (131 aa).

Polar residues predominate over residues 1–19 (MATVPTRSGSPRQLTTKQT). The interval 1–20 (MATVPTRSGSPRQLTTKQTG) is disordered.

This sequence belongs to the UPF0102 family.

The sequence is that of UPF0102 protein YraN from Escherichia fergusonii (strain ATCC 35469 / DSM 13698 / CCUG 18766 / IAM 14443 / JCM 21226 / LMG 7866 / NBRC 102419 / NCTC 12128 / CDC 0568-73).